Here is a 230-residue protein sequence, read N- to C-terminus: Ribonuclease 3 (230 aa).

Residues 5 to 134 (EALLENSFNI…FLGALLLDKG (130 aa)) form the RNase III domain. Mg(2+) is bound at residue glutamate 47. Aspartate 51 is an active-site residue. Residues aspartate 120 and glutamate 123 each coordinate Mg(2+). The active site involves glutamate 123. In terms of domain architecture, DRBM spans 160 to 229 (DYKTCLQELL…AKNALAQLSE (70 aa)).

This sequence belongs to the ribonuclease III family. Homodimer. Requires Mg(2+) as cofactor.

It localises to the cytoplasm. The enzyme catalyses Endonucleolytic cleavage to 5'-phosphomonoester.. Digests double-stranded RNA. Involved in the processing of primary rRNA transcript to yield the immediate precursors to the large and small rRNAs (23S and 16S). Processes some mRNAs, and tRNAs when they are encoded in the rRNA operon. Processes pre-crRNA and tracrRNA of type II CRISPR loci if present in the organism. The chain is Ribonuclease 3 from Streptococcus equi subsp. zooepidemicus (strain H70).